A 789-amino-acid chain; its full sequence is Polyribonucleotide nucleotidyltransferase (789 aa).

Residues Asp494 and Asp500 each contribute to the Mg(2+) site. One can recognise a KH domain in the interval 561–620 (PRIESIFINKDKIRNVIGSGGKNIREICEKTGARVEIMQDGTVMIYAINNDAVEYAKNMI). An S1 motif domain is found at 630 to 697 (GKVFDGTVIE…DREYVQLSMR (68 aa)). A disordered region spans residues 709–789 (GELYNIRKTN…NEVPRKPRFF (81 aa)). A compositionally biased stretch (basic residues) spans 737-749 (SEKKRRGSGRSRR). Low complexity predominate over residues 763–780 (NNGFGNGNRSFNDNRNGN).

Belongs to the polyribonucleotide nucleotidyltransferase family. Mg(2+) is required as a cofactor.

The protein resides in the cytoplasm. It carries out the reaction RNA(n+1) + phosphate = RNA(n) + a ribonucleoside 5'-diphosphate. In terms of biological role, involved in mRNA degradation. Catalyzes the phosphorolysis of single-stranded polyribonucleotides processively in the 3'- to 5'-direction. The polypeptide is Polyribonucleotide nucleotidyltransferase (Ehrlichia ruminantium (strain Gardel)).